A 162-amino-acid chain; its full sequence is UPF0460 protein y4vQ (162 aa).

It belongs to the UPF0460 family.

This chain is UPF0460 protein y4vQ, found in Sinorhizobium fredii (strain NBRC 101917 / NGR234).